Reading from the N-terminus, the 60-residue chain is Movement protein TGBp3 (60 aa).

Residues 1-6 lie on the Lumenal side of the membrane; it reads MHYIDW. Residues 7–23 traverse the membrane as a helical segment; it reads VILLTFAAALIVCLTPK. The Cytoplasmic portion of the chain corresponds to 24–60; it reads PEPCIITVSGASATVSNCPNPELLTDLVKALKPAKPV.

The protein belongs to the Tymovirales TGBp3 protein family.

It is found in the host endoplasmic reticulum membrane. Plays a role in viral cell-to-cell propagation, by facilitating genome transport to neighboring plant cells through plasmosdesmata. May induce the formation of granular vesicles derived from the Endoplasmic reticulum, which align on actin filaments. The protein is Movement protein TGBp3 of Citrus (ICRSV).